The primary structure comprises 486 residues: NADH-quinone oxidoreductase subunit N (486 aa).

The next 14 membrane-spanning stretches (helical) occupy residues 11–31, 44–64, 74–94, 103–123, 128–148, 163–183, 206–226, 238–258, 267–287, 300–320, 328–348, 371–391, 404–424, and 452–472; these read ALPEIVLLIAVSAILIIDLFV, MLALVATGAATLAAWLPYPVL, PIASVAKLGLVVATGVAMIYA, FLKGELFTLMLFALLGMCVMV, MLTLYIGLELLSLALYALIAL, FVLGALASGLLLYGVSMVYGG, VSLGLVFIVAGLAFKLGAVPF, PTAVTLFVGSAPKLAAFVFVI, PAAVAWQPMLILLAIASLVVG, MLAYSTISHMGFMLIGILAAT, MFYAITYMLMALAGFGVLLAL, YALLVLLVMFSMAGIPPLVGF, VGLTWLAVVGVVMSLIGAFYY, and LVLGVNGLVLLGLGILPNGLY.

The protein belongs to the complex I subunit 2 family. As to quaternary structure, NDH-1 is composed of 14 different subunits. Subunits NuoA, H, J, K, L, M, N constitute the membrane sector of the complex.

It is found in the cell inner membrane. It catalyses the reaction a quinone + NADH + 5 H(+)(in) = a quinol + NAD(+) + 4 H(+)(out). Its function is as follows. NDH-1 shuttles electrons from NADH, via FMN and iron-sulfur (Fe-S) centers, to quinones in the respiratory chain. The immediate electron acceptor for the enzyme in this species is believed to be ubiquinone. Couples the redox reaction to proton translocation (for every two electrons transferred, four hydrogen ions are translocated across the cytoplasmic membrane), and thus conserves the redox energy in a proton gradient. This chain is NADH-quinone oxidoreductase subunit N, found in Laribacter hongkongensis (strain HLHK9).